The following is a 264-amino-acid chain: Probable metallo-hydrolase YflN (264 aa).

The Zn(2+) site is built by His-80, His-82, Asp-84, His-85, His-169, Asp-188, and His-241.

This sequence belongs to the metallo-beta-lactamase superfamily. Requires Zn(2+) as cofactor.

This Bacillus subtilis (strain 168) protein is Probable metallo-hydrolase YflN (yflN).